The sequence spans 326 residues: o-succinylbenzoate synthase (326 aa).

Catalysis depends on K110, which acts as the Proton donor. Positions 138, 165, and 188 each coordinate Mg(2+). The active-site Proton acceptor is the K212.

Belongs to the mandelate racemase/muconate lactonizing enzyme family. MenC type 1 subfamily. The cofactor is a divalent metal cation.

It catalyses the reaction (1R,6R)-6-hydroxy-2-succinyl-cyclohexa-2,4-diene-1-carboxylate = 2-succinylbenzoate + H2O. It participates in quinol/quinone metabolism; 1,4-dihydroxy-2-naphthoate biosynthesis; 1,4-dihydroxy-2-naphthoate from chorismate: step 4/7. Its pathway is quinol/quinone metabolism; menaquinone biosynthesis. Functionally, converts 2-succinyl-6-hydroxy-2,4-cyclohexadiene-1-carboxylate (SHCHC) to 2-succinylbenzoate (OSB). This is o-succinylbenzoate synthase from Mycobacterium bovis (strain ATCC BAA-935 / AF2122/97).